Reading from the N-terminus, the 571-residue chain is Proline--tRNA ligase (571 aa).

It belongs to the class-II aminoacyl-tRNA synthetase family. ProS type 1 subfamily. In terms of assembly, homodimer.

It localises to the cytoplasm. It catalyses the reaction tRNA(Pro) + L-proline + ATP = L-prolyl-tRNA(Pro) + AMP + diphosphate. In terms of biological role, catalyzes the attachment of proline to tRNA(Pro) in a two-step reaction: proline is first activated by ATP to form Pro-AMP and then transferred to the acceptor end of tRNA(Pro). As ProRS can inadvertently accommodate and process non-cognate amino acids such as alanine and cysteine, to avoid such errors it has two additional distinct editing activities against alanine. One activity is designated as 'pretransfer' editing and involves the tRNA(Pro)-independent hydrolysis of activated Ala-AMP. The other activity is designated 'posttransfer' editing and involves deacylation of mischarged Ala-tRNA(Pro). The misacylated Cys-tRNA(Pro) is not edited by ProRS. This is Proline--tRNA ligase from Shewanella frigidimarina (strain NCIMB 400).